Reading from the N-terminus, the 273-residue chain is Putative carboxymethylenebutenolidase (273 aa).

Catalysis depends on residues C130, D191, and H223.

Belongs to the dienelactone hydrolase family.

The catalysed reaction is 2-(5-oxo-2,5-dihydrofuran-2-ylidene)acetate + H2O = 4-oxohex-2-enedioate + H(+). The chain is Putative carboxymethylenebutenolidase from Saccharomyces cerevisiae (strain ATCC 204508 / S288c) (Baker's yeast).